We begin with the raw amino-acid sequence, 364 residues long: Protein LATERAL BRANCHING OXIDOREDUCTASE 1 (364 aa).

Residues 203–312 (RFEEMFGEAV…RLTIVTFYAP (110 aa)) form the Fe2OG dioxygenase domain. 3 residues coordinate Fe cation: H235, D237, and H293. Residue R303 participates in 2-oxoglutarate binding.

It belongs to the iron/ascorbate-dependent oxidoreductase family. Monomer. Requires Fe(2+) as cofactor. L-ascorbate serves as cofactor. Expressed in the vasculature throughout the plant and in the buds and root tips.

The protein localises to the cytoplasm. The catalysed reaction is (11R)-methyl carlactonoate + 2-oxoglutarate + O2 = (11R)-hydroxymethyl carlactonoate + succinate + CO2. In terms of biological role, oxoglutarate-dependent dioxygenase involved in the biosynthesis of strigolactone natural products, bioactive compounds promoting plant fitness and soil microbe interactions, but preventing shoot branching. Catalyzes the hydroxylation of (11R)-methyl carlactonoate (MeCLA) to produce (11R)-hydroxymethyl carlactonoate (1'-HO-MeCLA) in final stages of strigolactone biosynthesis, downstream of MAX1 and CLAMT. The polypeptide is Protein LATERAL BRANCHING OXIDOREDUCTASE 1 (Arabidopsis thaliana (Mouse-ear cress)).